We begin with the raw amino-acid sequence, 237 residues long: Ribonuclease PH (237 aa).

Phosphate contacts are provided by residues R86 and 124-126; that span reads GTR.

It belongs to the RNase PH family. Homohexameric ring arranged as a trimer of dimers.

The enzyme catalyses tRNA(n+1) + phosphate = tRNA(n) + a ribonucleoside 5'-diphosphate. In terms of biological role, phosphorolytic 3'-5' exoribonuclease that plays an important role in tRNA 3'-end maturation. Removes nucleotide residues following the 3'-CCA terminus of tRNAs; can also add nucleotides to the ends of RNA molecules by using nucleoside diphosphates as substrates, but this may not be physiologically important. Probably plays a role in initiation of 16S rRNA degradation (leading to ribosome degradation) during starvation. The protein is Ribonuclease PH of Xanthobacter autotrophicus (strain ATCC BAA-1158 / Py2).